The chain runs to 256 residues: Ubiquinone/menaquinone biosynthesis C-methyltransferase UbiE (256 aa).

S-adenosyl-L-methionine contacts are provided by residues Thr-79, Asp-100, and Asp-128–Ala-129.

This sequence belongs to the class I-like SAM-binding methyltransferase superfamily. MenG/UbiE family.

It catalyses the reaction a 2-demethylmenaquinol + S-adenosyl-L-methionine = a menaquinol + S-adenosyl-L-homocysteine + H(+). The catalysed reaction is a 2-methoxy-6-(all-trans-polyprenyl)benzene-1,4-diol + S-adenosyl-L-methionine = a 5-methoxy-2-methyl-3-(all-trans-polyprenyl)benzene-1,4-diol + S-adenosyl-L-homocysteine + H(+). It participates in quinol/quinone metabolism; menaquinone biosynthesis; menaquinol from 1,4-dihydroxy-2-naphthoate: step 2/2. The protein operates within cofactor biosynthesis; ubiquinone biosynthesis. In terms of biological role, methyltransferase required for the conversion of demethylmenaquinol (DMKH2) to menaquinol (MKH2) and the conversion of 2-polyprenyl-6-methoxy-1,4-benzoquinol (DDMQH2) to 2-polyprenyl-3-methyl-6-methoxy-1,4-benzoquinol (DMQH2). The protein is Ubiquinone/menaquinone biosynthesis C-methyltransferase UbiE of Pseudomonas fluorescens (strain Pf0-1).